The following is a 173-amino-acid chain: Mediator of RNA polymerase II transcription subunit 19 (173 aa).

Residues 139 to 173 (LMRGDDMSENDEFGARRSKRKKKAQNGTDSKRQHI) form a disordered region.

The protein belongs to the Mediator complex subunit 19 family. As to quaternary structure, component of the Mediator complex.

The protein localises to the nucleus. Component of the Mediator complex, a coactivator involved in the regulated transcription of nearly all RNA polymerase II-dependent genes. Mediator functions as a bridge to convey information from gene-specific regulatory proteins to the basal RNA polymerase II transcription machinery. Mediator is recruited to promoters by direct interactions with regulatory proteins and serves as a scaffold for the assembly of a functional preinitiation complex with RNA polymerase II and the general transcription factors. This is Mediator of RNA polymerase II transcription subunit 19 (ROX3) from Scheffersomyces stipitis (strain ATCC 58785 / CBS 6054 / NBRC 10063 / NRRL Y-11545) (Yeast).